The chain runs to 266 residues: Oxygen-evolving enhancer protein 2-3, chloroplastic (266 aa).

A chloroplast-targeting transit peptide spans 1–80 (MASTQCFLHH…VGSKVSPADA (80 aa)).

Belongs to the PsbP family.

It is found in the plastid. The protein localises to the chloroplast thylakoid membrane. In terms of biological role, may be involved in the regulation of photosystem II. The protein is Oxygen-evolving enhancer protein 2-3, chloroplastic (PSBP3) of Nicotiana tabacum (Common tobacco).